The chain runs to 93 residues: Large ribosomal subunit protein uL23cz/uL23cy (93 aa).

It belongs to the universal ribosomal protein uL23 family. In terms of assembly, part of the 50S ribosomal subunit.

It localises to the plastid. Its subcellular location is the chloroplast. Binds to 23S rRNA. The chain is Large ribosomal subunit protein uL23cz/uL23cy (rpl23-A) from Atropa belladonna (Belladonna).